The following is a 306-amino-acid chain: Mycothiol acetyltransferase (306 aa).

2 N-acetyltransferase domains span residues 5–162 (VWAE…TFVP) and 155–306 (VRLR…AQGS). Acetyl-CoA contacts are provided by residues 82–84 (LIV) and 90–95 (RRGHGT). Glutamate 182, lysine 222, and glutamate 238 together coordinate 1D-myo-inositol 2-(L-cysteinylamino)-2-deoxy-alpha-D-glucopyranoside. Acetyl-CoA contacts are provided by residues 242-244 (VGV) and 249-255 (QGGGLGK). Tyrosine 276 is a 1D-myo-inositol 2-(L-cysteinylamino)-2-deoxy-alpha-D-glucopyranoside binding site.

Belongs to the acetyltransferase family. MshD subfamily. In terms of assembly, monomer.

The enzyme catalyses 1D-myo-inositol 2-(L-cysteinylamino)-2-deoxy-alpha-D-glucopyranoside + acetyl-CoA = mycothiol + CoA + H(+). In terms of biological role, catalyzes the transfer of acetyl from acetyl-CoA to desacetylmycothiol (Cys-GlcN-Ins) to form mycothiol. This is Mycothiol acetyltransferase from Saccharomonospora viridis (strain ATCC 15386 / DSM 43017 / JCM 3036 / CCUG 5913 / NBRC 12207 / NCIMB 9602 / P101) (Thermoactinomyces viridis).